Consider the following 133-residue polypeptide: Phosphoribosyl-AMP cyclohydrolase (133 aa).

A Mg(2+)-binding site is contributed by Asp77. Residue Cys78 coordinates Zn(2+). Mg(2+) contacts are provided by Asp79 and Asp81. Residues Cys95 and Cys102 each contribute to the Zn(2+) site.

The protein belongs to the PRA-CH family. As to quaternary structure, homodimer. Requires Mg(2+) as cofactor. Zn(2+) serves as cofactor.

The protein localises to the cytoplasm. It carries out the reaction 1-(5-phospho-beta-D-ribosyl)-5'-AMP + H2O = 1-(5-phospho-beta-D-ribosyl)-5-[(5-phospho-beta-D-ribosylamino)methylideneamino]imidazole-4-carboxamide. The protein operates within amino-acid biosynthesis; L-histidine biosynthesis; L-histidine from 5-phospho-alpha-D-ribose 1-diphosphate: step 3/9. Functionally, catalyzes the hydrolysis of the adenine ring of phosphoribosyl-AMP. The protein is Phosphoribosyl-AMP cyclohydrolase of Pseudomonas fluorescens (strain Pf0-1).